The primary structure comprises 764 residues: Oxysterol-binding protein-related protein 10 (764 aa).

A disordered region spans residues 1-74 (MERAVQGTDG…PSGGGGRRRE (74 aa)). Low complexity-rich tracts occupy residues 15–47 (NSSS…SAAA) and 55–65 (RSSPGSVAASP). Phosphoserine is present on residues Ser-29 and Ser-30. Omega-N-methylarginine is present on Arg-38. Ser-57, Ser-60, and Ser-64 each carry phosphoserine. Residues 74-171 (EPALEGVLSK…WVTQLRACAK (98 aa)) form the PH domain. The residue at position 196 (Thr-196) is a Phosphothreonine. Phosphoserine is present on residues Ser-201, Ser-209, and Ser-223. Disordered regions lie at residues 304 to 335 (GQPS…NGTL) and 354 to 391 (AEDE…TELG). Residues 359–370 (TSQPEPEPNSGS) show a composition bias toward polar residues. Acidic residues predominate over residues 374–389 (LSEDEKSDNEDKEETE). Residues 413–418 (LTKVVL) and 477–480 (KPYN) each bind a 1,2-diacyl-sn-glycero-3-phospho-(1D-myo-inositol 4-phosphate). Residues 413–418 (LTKVVL) and Asn-480 each bind a 1,2-diacyl-sn-glycero-3-phospho-L-serine. The tract at residues 501–520 (KRTASRSPASCHEHPMADDP) is disordered. The segment covering 511–520 (CHEHPMADDP) has biased composition (basic and acidic residues). Residue 535–536 (HH) coordinates a 1,2-diacyl-sn-glycero-3-phospho-(1D-myo-inositol 4-phosphate). Ser-561 is an a 1,2-diacyl-sn-glycero-3-phospho-L-serine binding site. Residues 713 to 740 (DIDAATEQKRHLEEKQRVEERKRENLRT) are a coiled coil. Positions 721, 725, and 729 each coordinate a 1,2-diacyl-sn-glycero-3-phospho-(1D-myo-inositol 4-phosphate).

This sequence belongs to the OSBP family. Interacts with OSBPL9. Interacts with DIAPH1.

The protein resides in the cytoplasm. It localises to the cytoskeleton. Functionally, probable lipid transporter involved in lipid countertransport between the endoplasmic reticulum and the plasma membrane. Its ability to bind phosphatidylserine, suggests that it specifically exchanges phosphatidylserine with phosphatidylinositol 4-phosphate (PI4P), delivering phosphatidylserine to the plasma membrane in exchange for PI4P. Plays a role in negative regulation of lipid biosynthesis. Negatively regulates APOB secretion from hepatocytes. Binds cholesterol and acidic phospholipids. Also binds 25-hydroxycholesterol. Binds phosphatidylserine. This chain is Oxysterol-binding protein-related protein 10 (OSBPL10), found in Homo sapiens (Human).